Here is a 356-residue protein sequence, read N- to C-terminus: Replication factor C subunit 3 (356 aa).

An N6-acetyllysine modification is found at Lys20. Ser125 carries the post-translational modification Phosphoserine.

The protein belongs to the activator 1 small subunits family. Subunit of the RFC complex, an heteropentameric complex consisting of a large subunit RFC1 and four small subunits RFC2, RFC3, RFC4 and RFC5; the RFC complex interacts with PCNA. Forms an heterotetrameric complex with RFC2, RFC4 and RFC5; this complex has ATPase activity but is not stimulated by PCNA. The heterotetramer of subunits RFC2, RFC3, RFC4 and RFC5 interacts with RAD17. Interacts with CNTD1; this interaction facilitates crossover formation.

It is found in the nucleus. Functionally, subunit of the replication factor C (RFC) complex which acts during elongation of primed DNA templates by DNA polymerases delta and epsilon, and is necessary for ATP-dependent loading of proliferating cell nuclear antigen (PCNA) onto primed DNA. This Mus musculus (Mouse) protein is Replication factor C subunit 3 (Rfc3).